We begin with the raw amino-acid sequence, 343 residues long: Dihydroorotate dehydrogenase (quinone) (343 aa).

FMN contacts are provided by residues 58–62 (AGYDK) and Ser82. Lys62 provides a ligand contact to substrate. 107–111 (NRMGF) is a binding site for substrate. FMN is bound by residues Asn136 and Asn167. Asn167 provides a ligand contact to substrate. Ser170 functions as the Nucleophile in the catalytic mechanism. Residue Asn172 participates in substrate binding. Positions 206 and 234 each coordinate FMN. 235 to 236 (NT) is a binding site for substrate. FMN contacts are provided by residues Gly256, Gly285, and 306–307 (YS).

It belongs to the dihydroorotate dehydrogenase family. Type 2 subfamily. In terms of assembly, monomer. It depends on FMN as a cofactor.

It is found in the cell membrane. The catalysed reaction is (S)-dihydroorotate + a quinone = orotate + a quinol. The protein operates within pyrimidine metabolism; UMP biosynthesis via de novo pathway; orotate from (S)-dihydroorotate (quinone route): step 1/1. In terms of biological role, catalyzes the conversion of dihydroorotate to orotate with quinone as electron acceptor. This Erythrobacter litoralis (strain HTCC2594) protein is Dihydroorotate dehydrogenase (quinone).